The sequence spans 471 residues: Ribulose bisphosphate carboxylase large chain (471 aa).

A propeptide spanning residues 1-2 is cleaved from the precursor; the sequence is MS. Residue P3 is modified to N-acetylproline. K14 carries the N6,N6,N6-trimethyllysine modification. Residues N123 and T173 each contribute to the substrate site. The active-site Proton acceptor is K175. Position 177 (K177) interacts with substrate. Mg(2+)-binding residues include K201, D203, and E204. An N6-carboxylysine modification is found at K201. H294 serves as the catalytic Proton acceptor. 3 residues coordinate substrate: R295, H327, and S379.

It belongs to the RuBisCO large chain family. Type I subfamily. Heterohexadecamer of 8 large chains and 8 small chains; disulfide-linked. The disulfide link is formed within the large subunit homodimers. Mg(2+) is required as a cofactor. In terms of processing, the disulfide bond which can form in the large chain dimeric partners within the hexadecamer appears to be associated with oxidative stress and protein turnover.

It is found in the plastid. The protein resides in the chloroplast. It catalyses the reaction 2 (2R)-3-phosphoglycerate + 2 H(+) = D-ribulose 1,5-bisphosphate + CO2 + H2O. It carries out the reaction D-ribulose 1,5-bisphosphate + O2 = 2-phosphoglycolate + (2R)-3-phosphoglycerate + 2 H(+). RuBisCO catalyzes two reactions: the carboxylation of D-ribulose 1,5-bisphosphate, the primary event in carbon dioxide fixation, as well as the oxidative fragmentation of the pentose substrate in the photorespiration process. Both reactions occur simultaneously and in competition at the same active site. The sequence is that of Ribulose bisphosphate carboxylase large chain from Drymophloeus subdistichus (Palm tree).